The chain runs to 508 residues: Histidine ammonia-lyase (508 aa).

The 5-imidazolinone (Ala-Gly) cross-link spans 141–143 (ASG). A 2,3-didehydroalanine (Ser) modification is found at S142.

This sequence belongs to the PAL/histidase family. Post-translationally, contains an active site 4-methylidene-imidazol-5-one (MIO), which is formed autocatalytically by cyclization and dehydration of residues Ala-Ser-Gly.

It is found in the cytoplasm. It catalyses the reaction L-histidine = trans-urocanate + NH4(+). It participates in amino-acid degradation; L-histidine degradation into L-glutamate; N-formimidoyl-L-glutamate from L-histidine: step 1/3. The protein is Histidine ammonia-lyase of Geobacillus sp. (strain WCH70).